Here is a 68-residue protein sequence, read N- to C-terminus: MKYFTLALTLLFLLLINPCKDMNFAWAESSEKVERASPQQAKYCYEQCNVNKVPFDQCYQMCSPLERS.

The N-terminal stretch at 1–21 (MKYFTLALTLLFLLLINPCKD) is a signal peptide. Positions 22–35 (MNFAWAESSEKVER) are excised as a propeptide. 2 disulfide bridges follow: Cys44–Cys62 and Cys48–Cys58.

Belongs to the short scorpion toxin superfamily. Potassium channel inhibitor kappa-KTx family. Kappa-KTx 1 subfamily. As to quaternary structure, monomer. As to expression, expressed by the venom gland.

The protein resides in the secreted. Its subcellular location is the host cytoplasm. Functionally, cell-penetrating peptide (CPP) with defensive purpose that induces pain by specifically activating mammalian sensory neuron TRPA1 channels. It non-covalently binds to the same region than other TRPA1 agonists (irritants), but acts via a distinct biochemical mechanism. Its binding stabilizes the TRPA1 open state and diminishes calcium-permeability. Consequently, it produces pain and pain hypersensitivity, but fails to trigger efferent release of neuropeptides (CGRP) and neurogenic inflammation typically produced by noxious electrophiles. Is not active on voltage-gated potassium channels and other TRP channels. This is Wasabi receptor toxin from Urodacus manicatus (Black rock scorpion).